The sequence spans 202 residues: D-alanyl-D-alanine dipeptidase (202 aa).

Positions 116 and 123 each coordinate Zn(2+). Glu-181 serves as the catalytic Proton donor/acceptor. Residue His-184 coordinates Zn(2+).

It belongs to the peptidase M15D family. Requires Zn(2+) as cofactor.

The catalysed reaction is D-alanyl-D-alanine + H2O = 2 D-alanine. Functionally, catalyzes hydrolysis of the D-alanyl-D-alanine dipeptide. The polypeptide is D-alanyl-D-alanine dipeptidase (vanXB) (Enterococcus faecalis (strain ATCC 700802 / V583)).